A 181-amino-acid polypeptide reads, in one-letter code: Insulin-like growth factor 2 (181 aa).

An N-terminal signal peptide occupies residues 1 to 24; it reads MGIPVGKSLLMLFTFLAFASCCIA. A b region spans residues 25–52; sequence AYRPSETLCGGELVDTLQFVCGDRGFYF. Disulfide bonds link Cys33–Cys71, Cys45–Cys84, and Cys70–Cys75. Residues 53–64 are c; the sequence is SRPASRINRRSR. An a region spans residues 65–85; sequence GIVEECCFRSCDLALLETYCA. The interval 86 to 91 is d; sequence TPAKSE. A propeptide spans 92–181 (e peptide); the sequence is RDVSTPPTVL…AFVEVSSDLQ (90 aa). Thr163 carries O-linked (GalNAc...) threonine glycosylation.

It belongs to the insulin family. In terms of assembly, interacts with MYORG; this interaction is required for IGF2 secretion. Interacts with integrins ITGAV:ITGB3 and ITGA6:ITGB4; integrin-binding is required for IGF2 signaling. Interacts with IGFBP2. In terms of processing, proteolytically processed by PCSK4, proIGF2 is cleaved at Arg-128 and Arg-92 to generate big-IGF2 and mature IGF2.

It localises to the secreted. The insulin-like growth factors possess growth-promoting activity. Major fetal growth hormone in mammals. Plays a key role in regulating fetoplacental development. IGF2 is influenced by placental lactogen. Also involved in tissue differentiation. In adults, involved in glucose metabolism in adipose tissue, skeletal muscle and liver. Acts as a ligand for integrin which is required for IGF2 signaling. Positively regulates myogenic transcription factor MYOD1 function by facilitating the recruitment of transcriptional coactivators, thereby controlling muscle terminal differentiation. Inhibits myoblast differentiation and modulates metabolism via increasing the mitochondrial respiration rate. Its function is as follows. Preptin undergoes glucose-mediated co-secretion with insulin, and acts as a physiological amplifier of glucose-mediated insulin secretion. Exhibits osteogenic properties by increasing osteoblast mitogenic activity through phosphoactivation of MAPK1 and MAPK3. The chain is Insulin-like growth factor 2 from Equus caballus (Horse).